A 185-amino-acid chain; its full sequence is Small ribosomal subunit protein uS7 (185 aa).

It belongs to the universal ribosomal protein uS7 family. In terms of assembly, part of the 30S ribosomal subunit.

In terms of biological role, one of the primary rRNA binding proteins, it binds directly to 16S rRNA where it nucleates assembly of the head domain of the 30S subunit. Is located at the subunit interface close to the decoding center. The chain is Small ribosomal subunit protein uS7 from Methanosarcina barkeri (strain Fusaro / DSM 804).